A 357-amino-acid polypeptide reads, in one-letter code: MFLEKLNSATSKIKLIEEKLQDINLIKNQKKYSKIIKEYTYLEKINTKKIEYEKILSQINDNKTILEKEDQQEMKELIKQELIDLDKKKEDLEHQIKILLLPQDENDSKNIIIEIRAGTGGEEAALFANNLYSMYIKYSERKKWKTEIINFNETELGGFKEIVFEIKGKDVFKKLKYESGVHRVQRIPITESNGRLQTSAATVAVLPNIEETEIDINEKDLRIDVYRSSGAGGQHVNTTDSAVRITHLPTGIVVQCQNERSQHKNKDQAMKILRARLYEFEDSKKQEQRSSNRKQQVGSGDRSERIRTYNFPQNRITDHRANITLYKLEEFMQGELDPLLDPLTIELQEQKFKSNNI.

The residue at position 234 (Gln234) is an N5-methylglutamine. Positions 283-313 (SKKQEQRSSNRKQQVGSGDRSERIRTYNFPQ) are disordered.

The protein belongs to the prokaryotic/mitochondrial release factor family. Methylated by PrmC. Methylation increases the termination efficiency of RF1.

It is found in the cytoplasm. Functionally, peptide chain release factor 1 directs the termination of translation in response to the peptide chain termination codons UAG and UAA. In Borrelia garinii subsp. bavariensis (strain ATCC BAA-2496 / DSM 23469 / PBi) (Borreliella bavariensis), this protein is Peptide chain release factor 1.